Here is a 69-residue protein sequence, read N- to C-terminus: MKLSAFTLAFALILMMAIMYNMAEAAALADADADAEAIAGLKDWWNKHKDKIVKVVKEMGKAGINAAGK.

The signal sequence occupies residues Met-1–Ala-25. Residues Ala-26 to Ala-39 constitute a propeptide that is removed on maturation.

Expressed by the venom gland.

The protein localises to the secreted. May have antimicrobial properties, like most ant linear peptides. In addition, when tested in vitro on the parasite Trypanosoma cruzi (responsible of the Chagas disease), is able to moderately reduce the number of the three forms (epimastigote, trypomastigote and amastigote) by inducing cell death through necrosis. The polypeptide is M-poneratoxin-Dq4e (Dinoponera quadriceps (South American ant)).